A 122-amino-acid chain; its full sequence is Large ribosomal subunit protein uL18 (122 aa).

It belongs to the universal ribosomal protein uL18 family. In terms of assembly, part of the 50S ribosomal subunit; part of the 5S rRNA/L5/L18/L25 subcomplex. Contacts the 5S and 23S rRNAs.

Functionally, this is one of the proteins that bind and probably mediate the attachment of the 5S RNA into the large ribosomal subunit, where it forms part of the central protuberance. The chain is Large ribosomal subunit protein uL18 from Prochlorococcus marinus (strain AS9601).